The primary structure comprises 434 residues: Probable zinc metalloprotease PTRG_04772 (434 aa).

Asn88 carries an N-linked (GlcNAc...) asparagine glycan. Zn(2+) is bound by residues His111, Asp131, and Glu164. Asn179 carries N-linked (GlcNAc...) asparagine glycosylation. Residue Asp191 participates in Zn(2+) binding. Asn220, Asn299, Asn347, Asn353, Asn390, and Asn395 each carry an N-linked (GlcNAc...) asparagine glycan. Residues 340–433 (SPTNVGINTT…LPFPFGCARN (94 aa)) enclose the Fibronectin type-III domain.

This sequence belongs to the peptidase M28 family. M28B subfamily. The cofactor is Zn(2+).

Its subcellular location is the secreted. The sequence is that of Probable zinc metalloprotease PTRG_04772 from Pyrenophora tritici-repentis (strain Pt-1C-BFP) (Wheat tan spot fungus).